The primary structure comprises 346 residues: Nitrilase 3 (346 aa).

At S2 the chain carries N-acetylserine. Residues 25–297 (VRVTIVQSST…EGLVTADLDL (273 aa)) enclose the CN hydrolase domain. E65 serves as the catalytic Proton acceptor. The active-site Proton donor is K152. Residue C186 is the Nucleophile of the active site.

Belongs to the carbon-nitrogen hydrolase superfamily. Nitrilase family.

The protein localises to the cell membrane. The enzyme catalyses a nitrile + 2 H2O = a carboxylate + NH4(+). Its function is as follows. Can convert indole-3-acetonitrile to the plant hormone indole-3-acetic acid. The protein is Nitrilase 3 (NIT3) of Arabidopsis thaliana (Mouse-ear cress).